Consider the following 400-residue polypeptide: Leucine-rich repeat flightless-interacting protein 2 (400 aa).

Disordered regions lie at residues 1–28 (MGTP…SNID) and 53–119 (LERQ…LSEV). Serine 18 bears the Phosphoserine mark. Residues 29 to 71 (REAEARLAAKRAARAEARDIRMRELERQQKELDEKSDKQYAEN) are a coiled coil. Residues 53 to 68 (LERQQKELDEKSDKQY) are compositionally biased toward basic and acidic residues. Over residues 73 to 102 (TRPSSRNSASATTPLSGNSSRRVSGDTSSL) the composition is skewed to polar residues. Phosphoserine is present on residues serine 77, serine 80, serine 88, serine 92, and serine 96. Phosphothreonine is present on threonine 99. Residues serine 100 and serine 101 each carry the phosphoserine modification. Coiled-coil stretches lie at residues 106 to 202 (DTSL…LIEK) and 245 to 393 (LDVR…KANR).

The protein belongs to the LRRFIP family. In terms of assembly, interacts with DVL3 and FLII. Weakly interacts with MYD88 in resting cells. Following LPS-stimulation, the interaction with MYD88 is rapidly enhanced; the complex gradually dissociates to basal levels after 6 hours of stimulation. Interaction with MYD88 is regulated by LPS-induced phosphorylation. In the presence of LPS, competes with FLII for MYD88-binding.

Its function is as follows. May function as activator of the canonical Wnt signaling pathway, in association with DVL3, upstream of CTNNB1/beta-catenin. Positively regulates Toll-like receptor (TLR) signaling in response to agonist probably by competing with the negative FLII regulator for MYD88-binding. This Bos taurus (Bovine) protein is Leucine-rich repeat flightless-interacting protein 2 (LRRFIP2).